Here is a 2241-residue protein sequence, read N- to C-terminus: GON-4-like protein (2241 aa).

2 disordered regions span residues 1 to 46 (MLPC…SSVS) and 122 to 259 (KLHA…GRGQ). Basic and acidic residues predominate over residues 30–40 (SAVKPESDQVK). Residues 122 to 135 (KLHATGSKRGKKMT) show a composition bias toward basic residues. The span at 143-152 (QEDRCDHLTL) shows a compositional bias: basic and acidic residues. The segment covering 183-201 (PSGSQSAKPVSQPRKSTQP) has biased composition (polar residues). At S206 the chain carries Phosphoserine. Over residues 243–255 (RRKKKKGTKRKRD) the composition is skewed to basic residues. Residue S346 is modified to Phosphoserine. Acidic residues predominate over residues 366-394 (EDDSSDEEYQPDDEEEDETAEESLLESDV). The interval 366–460 (EDDSSDEEYQ…PPKPKQTRDS (95 aa)) is disordered. The segment at 600-1339 (EMGFSNMEDD…EEAREEISGS (740 aa)) is required for interaction with YY1, SIN3A and HDAC1, and transcriptional repression activity. S775 bears the Phosphoserine mark. 2 disordered regions span residues 1008–1031 (PSPS…SEAP) and 1111–1131 (RKPY…SPCM). The span at 1111–1125 (RKPYVRRRPSKRRGV) shows a compositional bias: basic residues. Position 1268 is a phosphoserine (S1268). Disordered regions lie at residues 1301–1320 (ALEP…TPGD) and 1356–1601 (LDTG…RARA). Over residues 1386 to 1416 (PTKTPSSSQEPPDEGTSGTDVNKGSSKNALS) the composition is skewed to polar residues. S1426 carries the post-translational modification Phosphoserine. A compositionally biased stretch (polar residues) spans 1434–1443 (SSSVDGQSVG). Composition is skewed to acidic residues over residues 1458–1476 (EEEE…EDEM) and 1510–1534 (GESE…EAEG). Residues 1586–1600 (RNNHRARNKRGSRAR) show a composition bias toward basic residues. 2 PAH domains span residues 1624–1696 (EQKD…LLPE) and 1706–1777 (EQQA…FDHL). A disordered region spans residues 1809-1960 (PDVEEEEEPP…AVGSTLPSPR (152 aa)). Composition is skewed to basic and acidic residues over residues 1836 to 1848 (NHDK…DGAK) and 1879 to 1901 (CDSK…HREA). Residues S1896, S1902, and S1977 each carry the phosphoserine modification. Disordered regions lie at residues 2002-2025 (EVRS…AVSE), 2039-2149 (EKLP…VSST), and 2208-2241 (CEAS…ELDE). S2107 is subject to Phosphoserine. A compositionally biased stretch (polar residues) spans 2140 to 2149 (CANNSKVSST). A Myb-like domain is found at 2148–2201 (STGEKVVLWTREADRVILTMCQEQGAQPQTFNIISQQLGNKTPAEVSHRFRELM).

Found in a complex with YY1, SIN3A and HDAC1.

The protein resides in the nucleus. Has transcriptional repressor activity, probably as part of a complex with YY1, SIN3A and HDAC1. Required for B cell lymphopoiesis. The polypeptide is GON-4-like protein (GON4L) (Homo sapiens (Human)).